The primary structure comprises 143 residues: S-protein homolog 11 (143 aa).

A signal peptide spans 1–20 (MNCFSFSFIIIVLCAGSSNA).

This sequence belongs to the plant self-incompatibility (S1) protein family.

It localises to the secreted. The polypeptide is S-protein homolog 11 (Arabidopsis thaliana (Mouse-ear cress)).